The primary structure comprises 302 residues: Bacteriochlorophyll synthase 33 kDa chain (302 aa).

Transmembrane regions (helical) follow at residues 25 to 45 (ITWF…GIWP), 49 to 69 (WPLV…MSQA), 97 to 117 (WGLY…WMLG), 119 to 139 (WGFG…VEPI), 145 to 165 (GWWG…FTGA), 166 to 186 (AVLS…LYAF), 223 to 243 (LACT…VIWG), 246 to 266 (IHAG…RVLL), and 275 to 295 (WYNG…AFAI).

It is found in the cell membrane. The protein operates within porphyrin-containing compound metabolism; bacteriochlorophyll biosynthesis (light-independent). In terms of biological role, catalyzes the esterification of bacteriochlorophyllide a by geranylgeraniol-PPi. The sequence is that of Bacteriochlorophyll synthase 33 kDa chain (bchG) from Cereibacter sphaeroides (strain ATCC 17023 / DSM 158 / JCM 6121 / CCUG 31486 / LMG 2827 / NBRC 12203 / NCIMB 8253 / ATH 2.4.1.) (Rhodobacter sphaeroides).